The chain runs to 459 residues: UDP-N-acetylmuramate--L-alanine ligase (459 aa).

113–119 (GSHGKTS) is a binding site for ATP.

The protein belongs to the MurCDEF family.

It is found in the cytoplasm. It catalyses the reaction UDP-N-acetyl-alpha-D-muramate + L-alanine + ATP = UDP-N-acetyl-alpha-D-muramoyl-L-alanine + ADP + phosphate + H(+). It functions in the pathway cell wall biogenesis; peptidoglycan biosynthesis. Its function is as follows. Cell wall formation. The protein is UDP-N-acetylmuramate--L-alanine ligase of Desulfotalea psychrophila (strain LSv54 / DSM 12343).